Here is a 249-residue protein sequence, read N- to C-terminus: Histone H1 (249 aa).

Low complexity-rich tracts occupy residues 1-19 and 27-43; these read MSDS…QTAS and KKPA…TTAP. Disordered regions lie at residues 1–53 and 105–249; these read MSDS…QQMV and QTKG…ATKK. The region spanning 45–119 is the H15 domain; that stretch reads THPPTQQMVD…GASGSFKLSA (75 aa). Residues 121-134 show a composition bias toward basic and acidic residues; it reads SKKEPKPKVSSVEK. Residues 146–158 show a composition bias toward basic residues; it reads AKKKTISATKKPK. Over residues 173–190 the composition is skewed to basic and acidic residues; sequence KSVDKKKAEKAKAKDAKK. Residues 195–233 show a composition bias toward low complexity; that stretch reads KAKPTTAKAKSSAAKPKTPKPKTTSAKPKKVVAAASPKK. Positions 234–249 are enriched in basic residues; the sequence is AAAKKPKAKTASATKK.

This sequence belongs to the histone H1/H5 family.

It localises to the nucleus. The protein resides in the chromosome. Histones H1 are necessary for the condensation of nucleosome chains into higher-order structures. The chain is Histone H1 (His1) from Drosophila hydei (Fruit fly).